The following is a 672-amino-acid chain: tRNA(Met) cytidine acetyltransferase TmcA (672 aa).

ATP-binding positions include glutamine 180, 202-211 (GRGKSALAGQ), and arginine 319. The region spanning 349 to 531 (IEISAFYQQA…SGCYTAMALL (183 aa)) is the N-acetyltransferase domain. Acetyl-CoA contacts are provided by residues 461-463 (IAV), 468-474 (QREGIGQ), and arginine 506.

Belongs to the RNA cytidine acetyltransferase family. TmcA subfamily.

The protein resides in the cytoplasm. It carries out the reaction cytidine(34) in elongator tRNA(Met) + acetyl-CoA + ATP + H2O = N(4)-acetylcytidine(34) in elongator tRNA(Met) + ADP + phosphate + CoA + H(+). Its function is as follows. Catalyzes the formation of N(4)-acetylcytidine (ac(4)C) at the wobble position of tRNA(Met), by using acetyl-CoA as an acetyl donor and ATP (or GTP). The polypeptide is tRNA(Met) cytidine acetyltransferase TmcA (Salmonella typhimurium (strain LT2 / SGSC1412 / ATCC 700720)).